A 758-amino-acid chain; its full sequence is Xaa-Pro dipeptidyl-peptidase (758 aa).

Residues serine 349, aspartate 469, and histidine 499 each act as charge relay system in the active site.

This sequence belongs to the peptidase S15 family. Homodimer.

The protein resides in the cytoplasm. The enzyme catalyses Hydrolyzes Xaa-Pro-|- bonds to release unblocked, N-terminal dipeptides from substrates including Ala-Pro-|-p-nitroanilide and (sequentially) Tyr-Pro-|-Phe-Pro-|-Gly-Pro-|-Ile.. Removes N-terminal dipeptides sequentially from polypeptides having unsubstituted N-termini provided that the penultimate residue is proline. The chain is Xaa-Pro dipeptidyl-peptidase from Streptococcus uberis (strain ATCC BAA-854 / 0140J).